The sequence spans 177 residues: Bifunctional protein PyrR (177 aa).

The PRPP-binding signature appears at Val99 to Thr111.

Belongs to the purine/pyrimidine phosphoribosyltransferase family. PyrR subfamily.

The catalysed reaction is UMP + diphosphate = 5-phospho-alpha-D-ribose 1-diphosphate + uracil. Functionally, regulates the transcription of the pyrimidine nucleotide (pyr) operon in response to exogenous pyrimidines. In terms of biological role, also displays a weak uracil phosphoribosyltransferase activity which is not physiologically significant. The protein is Bifunctional protein PyrR of Geobacter sulfurreducens (strain ATCC 51573 / DSM 12127 / PCA).